We begin with the raw amino-acid sequence, 799 residues long: Target of rapamycin complex 1 subunit TCO89 (799 aa).

The disordered stretch occupies residues 18-41; sequence NASTVSHQSKPFRQFSTRSRAKSN. 2 positions are modified to phosphothreonine: T52 and T82. Phosphoserine is present on residues S84, S104, S107, S115, and S144. Polar residues predominate over residues 97-126; that stretch reads NQGKRSASFHSPVHNTLLSPKNSSHSNTGT. Disordered regions lie at residues 97–171 and 201–284; these read NQGK…DNIE and LQSP…ADID. Positions 147–156 are enriched in basic and acidic residues; sequence DAQESKKSES. Positions 157 to 170 are enriched in acidic residues; sequence TTDEEVECFSEDNI. Phosphoserine occurs at positions 203 and 215. Residues 213-224 show a composition bias toward basic and acidic residues; the sequence is DKSGTDGKENHR. Residues 233-243 are compositionally biased toward polar residues; it reads LSSNNYFGESS. Over residues 244–253 the composition is skewed to basic and acidic residues; it reads HSIEHQKDGE. The segment covering 254–269 has biased composition (polar residues); the sequence is TSPSSIETKLNATSVI. At S290 the chain carries Phosphoserine. Residues 324-391 form a disordered region; that stretch reads AHKSNQKPSH…PDDISSAGTK (68 aa). Residues 332–346 show a composition bias toward basic and acidic residues; it reads SHSDEQFDQEDHIDA. A compositionally biased stretch (low complexity) spans 348 to 363; the sequence is RSNSSRKSDSSFMSLR. At S397 the chain carries Phosphoserine. 2 disordered regions span residues 418-476 and 538-568; these read FENS…QSTF and NKNS…RQSN. Polar residues-rich tracts occupy residues 420–429 and 461–476; these read NSSSIQNSLG and GRSQ…QSTF. The residue at position 575 (S575) is a Phosphoserine. Residues 663–685 are disordered; that stretch reads IRKKSHNDAQSIAHSSSDTDHKD. S707 bears the Phosphoserine mark.

This sequence belongs to the TORC subunit TCO89 family. The target of rapamycin complex 1 (TORC1) is composed of at least KOG1, LST8, TCO89 and either TOR1 (TORC1-A) or TOR2 (TORC1-B). Interacts with PIB2; following activation of PIB2 by glutamine or cysteine. TORC1 binds to and is inhibited by FKBP-rapamycin.

It is found in the cell membrane. The protein localises to the vacuole membrane. Component of TORC1, which regulates multiple cellular processes to control cell growth in response to environmental signals. Nutrient limitation and environmental stress signals cause inactivation of TORC1. Active TORC1 positively controls ribosome biogenesis via control of rRNA, ribosomal protein and tRNA gene expression, and rRNA processing. TORC1 positively controls protein biosynthesis by regulation of mRNA stability, translation initiation factor activity, and high-affinity amino acid permeases that serve to provide amino acids for use by the translation machinery. TORC1 also promotes growth by sequestering a number of nutrient and general stress-responsive transcription factors in the cytoplasm. TORC1 negatively controls macroautophagy, a process to recycle surplus cytoplasmic mass under nutrient starvation conditions. This Saccharomyces cerevisiae (strain ATCC 204508 / S288c) (Baker's yeast) protein is Target of rapamycin complex 1 subunit TCO89 (TCO89).